The following is a 353-amino-acid chain: Nicotinate-nucleotide--dimethylbenzimidazole phosphoribosyltransferase (353 aa).

Glu320 functions as the Proton acceptor in the catalytic mechanism.

This sequence belongs to the CobT family.

The catalysed reaction is 5,6-dimethylbenzimidazole + nicotinate beta-D-ribonucleotide = alpha-ribazole 5'-phosphate + nicotinate + H(+). It participates in nucleoside biosynthesis; alpha-ribazole biosynthesis; alpha-ribazole from 5,6-dimethylbenzimidazole: step 1/2. In terms of biological role, catalyzes the synthesis of alpha-ribazole-5'-phosphate from nicotinate mononucleotide (NAMN) and 5,6-dimethylbenzimidazole (DMB). The polypeptide is Nicotinate-nucleotide--dimethylbenzimidazole phosphoribosyltransferase (Syntrophotalea carbinolica (strain DSM 2380 / NBRC 103641 / GraBd1) (Pelobacter carbinolicus)).